A 468-amino-acid polypeptide reads, in one-letter code: Purple acid phosphatase 10 (468 aa).

An N-terminal signal peptide occupies residues M1 to C25. Residues N95 and N113 are each glycosylated (N-linked (GlcNAc...) asparagine). D167 contributes to the Fe cation binding site. The N-linked (GlcNAc...) asparagine glycan is linked to N175. Residues D196 and Y199 each contribute to the Fe cation site. Zn(2+) is bound at residue D196. N233 lines the Zn(2+) pocket. Residue N233 participates in substrate binding. A glycan (N-linked (GlcNAc...) asparagine) is linked at N306. Residue H318 coordinates Zn(2+). Residue H328 is the Proton donor of the active site. Residue H355 coordinates Zn(2+). H355–H357 contributes to the substrate binding site. H357 contacts Fe cation. The N-linked (GlcNAc...) asparagine glycan is linked to N428.

The protein belongs to the metallophosphoesterase superfamily. Purple acid phosphatase family. Homodimer; disulfide-linked. Fe cation is required as a cofactor. It depends on Zn(2+) as a cofactor. In terms of tissue distribution, expressed in roots, stems, leaves, flowers and siliques.

Its subcellular location is the secreted. It localises to the cytoplasm. The enzyme catalyses a phosphate monoester + H2O = an alcohol + phosphate. The polypeptide is Purple acid phosphatase 10 (PAP10) (Arabidopsis thaliana (Mouse-ear cress)).